Here is a 607-residue protein sequence, read N- to C-terminus: NAD-dependent protein deacetylase sir-2.1 (607 aa).

Residues 1-68 (MSRDSGNDSE…SVSSESWQNN (68 aa)) form a disordered region. Positions 55 to 64 (ESTTSVSSES) are enriched in low complexity. The Deacetylase sirtuin-type domain occupies 128-401 (KLTNYNSLAD…DSIMEQQGKT (274 aa)). Residues 153–172 (GAGVSVSCGIPDFRSKDGIY) and 237–240 (QNID) contribute to the NAD(+) site. The Proton acceptor role is filled by His-255. Zn(2+) contacts are provided by Cys-263, Cys-266, Cys-287, and Cys-290. NAD(+) is bound by residues 327–329 (GSS), 352–354 (NRE), and Cys-369. The interval 426–453 (EKRNDDSSDEPTLKKPRMSVADDSMDSE) is disordered.

Belongs to the sirtuin family. Class I subfamily. Interacts with ftt-2 and par-5. Interacts with daf-16 following heat-shock, which causes daf-16 to accumulate in the nucleus. Interaction with daf-16 is promoted by ftt-2. Interacts with transcriptional coregulator hcf-1. Zn(2+) serves as cofactor.

The protein localises to the nucleus. It is found in the cytoplasm. The catalysed reaction is N(6)-acetyl-L-lysyl-[protein] + NAD(+) + H2O = 2''-O-acetyl-ADP-D-ribose + nicotinamide + L-lysyl-[protein]. NAD-dependent deacetylase. Involved in metabolism, apoptosis, response to oxidative stress, response to DNA damage, and determination of lifespan. Required for a reduction of the 'Lys-16' acetylation of histone H4 (H4K16ac) on dosage-compensated X chromosomes in hermaphrodites. Plays a role in germ cell and somatic cell apoptosis in response to DNA damage. Functions upstream of daf-16/Forkhead box protein O in the Insulin/IGF-1-like signaling (IIS) mediated pathway, promoting daf-16 mediated transcriptional activation and increased lifespan. May also regulate lifespan independently of daf-16 by modulating the transcription of genes involved in the stress response of the endoplasmic reticulum (ER). Functions upstream of transcriptional coregulator hcf-1, perhaps acting independently of the IIS mediated pathway, to modulate lifespan and oxidative stress response. Acts upstream of the nicotinic acid metabolism pathway, which may be linked to the regulation of longevity. Plays a role in ascaroside-mediated longevity and stress resistance. In Caenorhabditis elegans, this protein is NAD-dependent protein deacetylase sir-2.1.